Consider the following 212-residue polypeptide: Interleukin-6 (212 aa).

Residues 1 to 27 form the signal peptide; sequence MNSFSTSAFGPVAFSLGLLLVLPAAFP. Cysteines 72 and 78 form a disulfide. Asn-73 carries an N-linked (GlcNAc...) asparagine glycan. The residue at position 81 (Ser-81) is a Phosphoserine. Residues Cys-101 and Cys-111 are joined by a disulfide bond. Asn-172 carries an N-linked (GlcNAc...) asparagine glycan.

The protein belongs to the IL-6 superfamily. Component of a hexamer of two molecules each of IL6, IL6R and IL6ST; first binds to IL6R to associate with the signaling subunit IL6ST. Interacts with IL6R (via the N-terminal ectodomain); this interaction may be affected by IL6R-binding with SORL1, hence decreasing IL6 cis signaling. Interacts with SORL1 (via the N-terminal ectodomain); this interaction leads to IL6 internalization and lysosomal degradation. May form a trimeric complex with the soluble SORL1 ectodomain and soluble IL6R receptor; this interaction might stabilize circulating IL6, hence promoting IL6 trans signaling.

It localises to the secreted. Cytokine with a wide variety of biological functions in immunity, tissue regeneration, and metabolism. Binds to IL6R, then the complex associates to the signaling subunit IL6ST/gp130 to trigger the intracellular IL6-signaling pathway. The interaction with the membrane-bound IL6R and IL6ST stimulates 'classic signaling', whereas the binding of IL6 and soluble IL6R to IL6ST stimulates 'trans-signaling'. Alternatively, 'cluster signaling' occurs when membrane-bound IL6:IL6R complexes on transmitter cells activate IL6ST receptors on neighboring receiver cells. Its function is as follows. IL6 is a potent inducer of the acute phase response. Rapid production of IL6 contributes to host defense during infection and tissue injury, but excessive IL6 synthesis is involved in disease pathology. In the innate immune response, is synthesized by myeloid cells, such as macrophages and dendritic cells, upon recognition of pathogens through toll-like receptors (TLRs) at the site of infection or tissue injury. In the adaptive immune response, is required for the differentiation of B cells into immunoglobulin-secreting cells. Plays a major role in the differentiation of CD4(+) T cell subsets. Essential factor for the development of T follicular helper (Tfh) cells that are required for the induction of germinal-center formation. Required to drive naive CD4(+) T cells to the Th17 lineage. Also required for proliferation of myeloma cells and the survival of plasmablast cells. Functionally, acts as an essential factor in bone homeostasis and on vessels directly or indirectly by induction of VEGF, resulting in increased angiogenesis activity and vascular permeability. Induces, through 'trans-signaling' and synergistically with IL1B and TNF, the production of VEGF. Involved in metabolic controls, is discharged into the bloodstream after muscle contraction increasing lipolysis and improving insulin resistance. 'Trans-signaling' in central nervous system also regulates energy and glucose homeostasis. Mediates, through GLP-1, crosstalk between insulin-sensitive tissues, intestinal L cells and pancreatic islets to adapt to changes in insulin demand. Also acts as a myokine. Plays a protective role during liver injury, being required for maintenance of tissue regeneration. Also has a pivotal role in iron metabolism by regulating HAMP/hepcidin expression upon inflammation or bacterial infection. Through activation of IL6ST-YAP-NOTCH pathway, induces inflammation-induced epithelial regeneration. In Macaca mulatta (Rhesus macaque), this protein is Interleukin-6 (IL6).